The chain runs to 180 residues: Oligoribonuclease (180 aa).

Residues 7 to 170 (LIWIDLEMTG…DDIRESIAEL (164 aa)) form the Exonuclease domain. Residue tyrosine 128 is part of the active site.

The protein belongs to the oligoribonuclease family.

Its subcellular location is the cytoplasm. Its function is as follows. 3'-to-5' exoribonuclease specific for small oligoribonucleotides. This is Oligoribonuclease from Pseudomonas fluorescens (strain Pf0-1).